A 338-amino-acid polypeptide reads, in one-letter code: Uroporphyrinogen decarboxylase (338 aa).

Substrate contacts are provided by residues 21–25 (RQAGR), Asp71, Tyr146, Ser201, and His316.

It belongs to the uroporphyrinogen decarboxylase family. As to quaternary structure, homodimer.

It is found in the cytoplasm. The catalysed reaction is uroporphyrinogen III + 4 H(+) = coproporphyrinogen III + 4 CO2. It participates in porphyrin-containing compound metabolism; protoporphyrin-IX biosynthesis; coproporphyrinogen-III from 5-aminolevulinate: step 4/4. Functionally, catalyzes the decarboxylation of four acetate groups of uroporphyrinogen-III to yield coproporphyrinogen-III. This chain is Uroporphyrinogen decarboxylase, found in Rickettsia akari (strain Hartford).